A 199-amino-acid chain; its full sequence is Protein-methionine-sulfoxide reductase heme-binding subunit MsrQ (199 aa).

The next 5 membrane-spanning stretches (helical) occupy residues 13-33 (VLLH…VDQG), 79-99 (LLGL…ALLE), 120-140 (LGVI…QIMM), 147-167 (WQKL…HYLW), and 169-189 (VKTL…LLLF).

The protein belongs to the MsrQ family. In terms of assembly, heterodimer of a catalytic subunit (MsrP) and a heme-binding subunit (MsrQ). The cofactor is FMN. Heme b serves as cofactor.

It is found in the cell inner membrane. Its function is as follows. Part of the MsrPQ system that repairs oxidized periplasmic proteins containing methionine sulfoxide residues (Met-O), using respiratory chain electrons. Thus protects these proteins from oxidative-stress damage caused by reactive species of oxygen and chlorine generated by the host defense mechanisms. MsrPQ is essential for the maintenance of envelope integrity under bleach stress, rescuing a wide series of structurally unrelated periplasmic proteins from methionine oxidation. MsrQ provides electrons for reduction to the reductase catalytic subunit MsrP, using the quinone pool of the respiratory chain. The polypeptide is Protein-methionine-sulfoxide reductase heme-binding subunit MsrQ (Pectobacterium carotovorum subsp. carotovorum (strain PC1)).